A 393-amino-acid polypeptide reads, in one-letter code: N-acyl-phosphatidylethanolamine-hydrolyzing phospholipase D (393 aa).

At Met-1 the chain carries N-acetylmethionine. Positions 1–16 (MDENESNQSLMTSSQY) are enriched in polar residues. Residues 1–40 (MDENESNQSLMTSSQYPKEAVRKRQNSARNSGASDSSRFS) form a disordered region. Residues His-185 and His-187 each coordinate Zn(2+). Tyr-188 provides a ligand contact to an N-acyl-1,2-diacyl-sn-glycero-3-phosphoethanolamine. Residues Asp-189, His-190, and His-253 each contribute to the Zn(2+) site. Lys-256 and Met-260 together coordinate deoxycholate. A Zn(2+)-binding site is contributed by Asp-284. His-321 serves as a coordination point for an N-acyl-1,2-diacyl-sn-glycero-3-phosphoethanolamine. Residue His-343 participates in Zn(2+) binding. A deoxycholate-binding site is contributed by Ala-348.

The protein belongs to the NAPE-PLD family. As to quaternary structure, homodimer. Bile acids promote the assembly of inactive monomers into an active dimer and enable catalysis. Zn(2+) is required as a cofactor. Widely expressed. Highest expression in brain, kidney and testis (at protein level). Expressed in adipose tissue (at protein level).

It is found in the golgi apparatus membrane. Its subcellular location is the early endosome membrane. The protein resides in the nucleus envelope. It localises to the nucleus. The protein localises to the nucleoplasm. It catalyses the reaction an N-acyl-1,2-diacyl-sn-glycero-3-phosphoethanolamine + H2O = an N-acylethanolamine + a 1,2-diacyl-sn-glycero-3-phosphate + H(+). The enzyme catalyses N-butanoyl-1-hexadecanoyl-2-(9Z,12Z-octadecadienoyl)-sn-glycero-3-phosphoethanolamine + H2O = N-butanoyl ethanolamine + 1-hexadecanoyl-2-(9Z,12Z-octadecadienoyl)-sn-glycero-3-phosphate + H(+). The catalysed reaction is N-hexanoyl-1-hexadecanoyl-2-(9Z,12Z-octadecadienoyl)-sn-glycero-3-phosphoethanolamine + H2O = N-hexanoyl ethanolamine + 1-hexadecanoyl-2-(9Z,12Z-octadecadienoyl)-sn-glycero-3-phosphate + H(+). It carries out the reaction N-octanoyl-1-hexadecanoyl-2-(9Z,12Z-octadecadienoyl)-sn-glycero-3-phosphoethanolamine + H2O = N-octanoyl ethanolamine + 1-hexadecanoyl-2-(9Z,12Z-octadecadienoyl)-sn-glycero-3-phosphate + H(+). It catalyses the reaction N-decanoyl-1-hexadecanoyl-2-(9Z,12Z-octadecadienoyl)-sn-glycero-3-phosphoethanolamine + H2O = N-decanoyl ethanolamine + 1-hexadecanoyl-2-(9Z,12Z-octadecadienoyl)-sn-glycero-3-phosphate + H(+). The enzyme catalyses N-dodecanoyl-1,2-di-(9Z-octadecenoyl)-sn-glycero-3-phosphoethanolamine + H2O = N-dodecanoylethanolamine + 1,2-di-(9Z-octadecenoyl)-sn-glycero-3-phosphate + H(+). The catalysed reaction is N-tetradecanoyl-1,2-di-(9Z-octadecenoyl)-sn-glycero-3-phosphoethanolamine + H2O = N-tetradecanoylethanolamine + 1,2-di-(9Z-octadecenoyl)-sn-glycero-3-phosphate + H(+). It carries out the reaction N-hexadecanoyl-1,2-di-(9Z-octadecenoyl)-sn-glycero-3-phosphoethanolamine + H2O = N-hexadecanoylethanolamine + 1,2-di-(9Z-octadecenoyl)-sn-glycero-3-phosphate + H(+). It catalyses the reaction N,1-dihexadecanoyl-2-(9Z,12Z-octadecadienoyl)-sn-glycero-3-phosphoethanolamine + H2O = 1-hexadecanoyl-2-(9Z,12Z-octadecadienoyl)-sn-glycero-3-phosphate + N-hexadecanoylethanolamine + H(+). The enzyme catalyses N-octadecanoyl-1,2-di-(9Z-octadecenoyl)-sn-glycero-3-phosphoethanolamine + H2O = N-octadecanoyl ethanolamine + 1,2-di-(9Z-octadecenoyl)-sn-glycero-3-phosphate + H(+). The catalysed reaction is N,1,2-tri-(9Z-octadecenoyl)-sn-glycero-3-phosphoethanolamine + H2O = N-(9Z-octadecenoyl) ethanolamine + 1,2-di-(9Z-octadecenoyl)-sn-glycero-3-phosphate + H(+). It carries out the reaction N-(5Z,8Z,11Z,14Z-eicosatetraenoyl)-1,2-diacyl-sn-glycero-3-phosphoethanolamine + H2O = N-(5Z,8Z,11Z,14Z-eicosatetraenoyl)-ethanolamine + a 1,2-diacyl-sn-glycero-3-phosphate + H(+). It catalyses the reaction N-(5Z,8Z,11Z,14Z-eicosatetraenoyl)-1,2-di-(9Z-octadecenoyl)-sn-glycero-3-phosphoethanolamine + H2O = N-(5Z,8Z,11Z,14Z-eicosatetraenoyl)-ethanolamine + 1,2-di-(9Z-octadecenoyl)-sn-glycero-3-phosphate + H(+). The enzyme catalyses 1-O-(1Z-octadecenoyl)-2-(9Z-octadecenoyl)-sn-glycero-3-phospho-N-hexadecanoyl-ethanolamine + H2O = 1-O-(1Z-octadecenoyl)-2-(9Z-octadecenoyl)-sn-glycero-3-phosphate + N-hexadecanoylethanolamine + H(+). The catalysed reaction is N,1-diacyl-sn-glycero-3-phosphoethanolamine + H2O = an N-acylethanolamine + a 1-acyl-sn-glycero-3-phosphate + H(+). It carries out the reaction N,1-dihexadecanoyl-sn-glycero-3-phosphoethanolamine + H2O = N-hexadecanoylethanolamine + 1-hexadecanoyl-sn-glycero-3-phosphate + H(+). It catalyses the reaction N-(5Z,8Z,11Z,14Z-eicosatetraenoyl)-1-(9Z-octadecenoyl)-sn-glycero-3-phosphoethanolamine + H2O = N-(5Z,8Z,11Z,14Z-eicosatetraenoyl)-ethanolamine + 1-(9Z-octadecenoyl)-sn-glycero-3-phosphate + H(+). Activated by divalent cations. Activated by bile acids and their conjugates, except for lithocholic acid which is rather inhibitory. Binding of deoxycholic acid favors the selective release of anandamide and likely other unsatured long FAEs. Inhibited by phosphatidylethanolamines. Functionally, D-type phospholipase that hydrolyzes N-acyl-phosphatidylethanolamines (NAPEs) to produce bioactive N-acylethanolamines/fatty acid ethanolamides (NAEs/FAEs) and phosphatidic acid. Cleaves the terminal phosphodiester bond of diacyl- and alkenylacyl-NAPEs, primarily playing a role in the generation of long-chain saturated and monounsaturated NAEs in the brain. May control NAPE homeostasis in dopaminergic neuron membranes and regulate neuron survival, partly through RAC1 activation. As a regulator of lipid metabolism in the adipose tissue, mediates the crosstalk between adipocytes, gut microbiota and immune cells to control body temperature and weight. In particular, regulates energy homeostasis by promoting cold-induced brown or beige adipocyte differentiation program to generate heat from fatty acids and glucose. Has limited D-type phospholipase activity toward N-acyl lyso-NAPEs. This chain is N-acyl-phosphatidylethanolamine-hydrolyzing phospholipase D (NAPEPLD), found in Homo sapiens (Human).